Consider the following 211-residue polypeptide: Thiamine-phosphate synthase (211 aa).

4-amino-2-methyl-5-(diphosphooxymethyl)pyrimidine is bound by residues 37–41 (QLRIK) and Asn-69. Positions 70 and 89 each coordinate Mg(2+). Ser-108 contacts 4-amino-2-methyl-5-(diphosphooxymethyl)pyrimidine. A 2-[(2R,5Z)-2-carboxy-4-methylthiazol-5(2H)-ylidene]ethyl phosphate-binding site is contributed by 134 to 136 (TQT). Lys-137 lines the 4-amino-2-methyl-5-(diphosphooxymethyl)pyrimidine pocket. 2-[(2R,5Z)-2-carboxy-4-methylthiazol-5(2H)-ylidene]ethyl phosphate contacts are provided by residues Gly-166 and 186–187 (VS).

The protein belongs to the thiamine-phosphate synthase family. Requires Mg(2+) as cofactor.

It catalyses the reaction 2-[(2R,5Z)-2-carboxy-4-methylthiazol-5(2H)-ylidene]ethyl phosphate + 4-amino-2-methyl-5-(diphosphooxymethyl)pyrimidine + 2 H(+) = thiamine phosphate + CO2 + diphosphate. It carries out the reaction 2-(2-carboxy-4-methylthiazol-5-yl)ethyl phosphate + 4-amino-2-methyl-5-(diphosphooxymethyl)pyrimidine + 2 H(+) = thiamine phosphate + CO2 + diphosphate. The enzyme catalyses 4-methyl-5-(2-phosphooxyethyl)-thiazole + 4-amino-2-methyl-5-(diphosphooxymethyl)pyrimidine + H(+) = thiamine phosphate + diphosphate. It participates in cofactor biosynthesis; thiamine diphosphate biosynthesis; thiamine phosphate from 4-amino-2-methyl-5-diphosphomethylpyrimidine and 4-methyl-5-(2-phosphoethyl)-thiazole: step 1/1. Its function is as follows. Condenses 4-methyl-5-(beta-hydroxyethyl)thiazole monophosphate (THZ-P) and 2-methyl-4-amino-5-hydroxymethyl pyrimidine pyrophosphate (HMP-PP) to form thiamine monophosphate (TMP). The polypeptide is Thiamine-phosphate synthase (Salmonella schwarzengrund (strain CVM19633)).